The chain runs to 283 residues: Phosphatidylserine decarboxylase proenzyme (283 aa).

Active-site charge relay system; for autoendoproteolytic cleavage activity residues include Asp89, His146, and Ser249. The active-site Schiff-base intermediate with substrate; via pyruvic acid; for decarboxylase activity is Ser249. Ser249 is modified (pyruvic acid (Ser); by autocatalysis).

This sequence belongs to the phosphatidylserine decarboxylase family. PSD-B subfamily. Prokaryotic type I sub-subfamily. Heterodimer of a large membrane-associated beta subunit and a small pyruvoyl-containing alpha subunit. It depends on pyruvate as a cofactor. Is synthesized initially as an inactive proenzyme. Formation of the active enzyme involves a self-maturation process in which the active site pyruvoyl group is generated from an internal serine residue via an autocatalytic post-translational modification. Two non-identical subunits are generated from the proenzyme in this reaction, and the pyruvate is formed at the N-terminus of the alpha chain, which is derived from the carboxyl end of the proenzyme. The autoendoproteolytic cleavage occurs by a canonical serine protease mechanism, in which the side chain hydroxyl group of the serine supplies its oxygen atom to form the C-terminus of the beta chain, while the remainder of the serine residue undergoes an oxidative deamination to produce ammonia and the pyruvoyl prosthetic group on the alpha chain. During this reaction, the Ser that is part of the protease active site of the proenzyme becomes the pyruvoyl prosthetic group, which constitutes an essential element of the active site of the mature decarboxylase.

The protein localises to the cell membrane. The enzyme catalyses a 1,2-diacyl-sn-glycero-3-phospho-L-serine + H(+) = a 1,2-diacyl-sn-glycero-3-phosphoethanolamine + CO2. It participates in phospholipid metabolism; phosphatidylethanolamine biosynthesis; phosphatidylethanolamine from CDP-diacylglycerol: step 2/2. Its function is as follows. Catalyzes the formation of phosphatidylethanolamine (PtdEtn) from phosphatidylserine (PtdSer). This is Phosphatidylserine decarboxylase proenzyme from Legionella pneumophila (strain Lens).